Here is a 174-residue protein sequence, read N- to C-terminus: Adipose-secreted signaling protein (174 aa).

The protein belongs to the ADISSP family.

The protein resides in the secreted. In terms of biological role, may be involved in thermogenesis and glucose homeostasis. The protein is Adipose-secreted signaling protein of Xenopus tropicalis (Western clawed frog).